Here is an 83-residue protein sequence, read N- to C-terminus: Sec-independent protein translocase protein TatA (83 aa).

The helical transmembrane segment at methionine 1–glycine 21 threads the bilayer. A disordered region spans residues asparagine 48–alanine 83. A compositionally biased stretch (polar residues) spans glutamate 57–serine 77.

Belongs to the TatA/E family. As to quaternary structure, the Tat system comprises two distinct complexes: a TatABC complex, containing multiple copies of TatA, TatB and TatC subunits, and a separate TatA complex, containing only TatA subunits. Substrates initially bind to the TatABC complex, which probably triggers association of the separate TatA complex to form the active translocon.

It localises to the cell membrane. Part of the twin-arginine translocation (Tat) system that transports large folded proteins containing a characteristic twin-arginine motif in their signal peptide across membranes. TatA could form the protein-conducting channel of the Tat system. This chain is Sec-independent protein translocase protein TatA, found in Mycobacterium bovis (strain BCG / Pasteur 1173P2).